The following is a 263-amino-acid chain: Small ribosomal subunit protein uS2 (263 aa).

Belongs to the universal ribosomal protein uS2 family.

This chain is Small ribosomal subunit protein uS2, found in Roseiflexus castenholzii (strain DSM 13941 / HLO8).